Reading from the N-terminus, the 310-residue chain is Integrin-binding sialoprotein (310 aa).

A signal peptide spans 1–16 (MKTVLILLSILGMACA). Phosphoserine occurs at positions 31, 62, 67, 75, 76, 98, and 106. A disordered region spans residues 61-284 (QSSSDSSEEN…NGDPRGDNYR (224 aa)). The span at 62 to 74 (SSSDSSEENGNGD) shows a compositional bias: low complexity. Composition is skewed to acidic residues over residues 75 to 87 (SSEE…ETSN) and 96 to 108 (EDSD…ESEA). Asparagine 110 carries N-linked (GlcNAc...) asparagine glycosylation. Threonine 144 bears the Phosphothreonine mark. A compositionally biased stretch (acidic residues) spans 152–174 (DESDEEEEEEEEEENEAEVDDNE). Serine 154 is subject to Phosphoserine. Over residues 175–187 (QGINGTSSNSTEV) the composition is skewed to polar residues. N-linked (GlcNAc...) asparagine glycans are attached at residues asparagine 178 and asparagine 183. Residues 198–208 (NGEEDGEEESV) are compositionally biased toward acidic residues. Positions 209–227 (TEANTEGITVAGETTTSPN) are enriched in polar residues. Serine 273 bears the Phosphoserine mark. An Integrin-binding motif motif is present at residues 279-281 (RGD). Serine 300 is subject to Phosphoserine. Sulfotyrosine occurs at positions 306 and 307.

Monomer. Interacts with integrins; the interaction promotes cell adhesion.

Its subcellular location is the secreted. Binds tightly to hydroxyapatite. Appears to form an integral part of the mineralized matrix. Probably important to cell-matrix interaction. Promotes adhesion and migration of various cells via the alpha-V/beta-3 integrin receptor (ITGAV:ITGB3). The polypeptide is Integrin-binding sialoprotein (IBSP) (Bos taurus (Bovine)).